The primary structure comprises 213 residues: Uridine kinase (213 aa).

15–22 (GGSGSGKT) contributes to the ATP binding site.

This sequence belongs to the uridine kinase family.

The protein localises to the cytoplasm. It carries out the reaction uridine + ATP = UMP + ADP + H(+). It catalyses the reaction cytidine + ATP = CMP + ADP + H(+). Its pathway is pyrimidine metabolism; CTP biosynthesis via salvage pathway; CTP from cytidine: step 1/3. It functions in the pathway pyrimidine metabolism; UMP biosynthesis via salvage pathway; UMP from uridine: step 1/1. The polypeptide is Uridine kinase (Ligilactobacillus salivarius (strain UCC118) (Lactobacillus salivarius)).